Consider the following 176-residue polypeptide: Sarcoplasmic calcium-binding protein (176 aa).

Thr-1 bears the N-acetylthreonine mark. EF-hand domains lie at 3-38 (YLVS…FTDL), 55-90 (KWWD…AFLA), 91-126 (TMTA…FGHE), and 127-160 (NESV…SFVT). Residues Asp-16, Asn-18, Asp-20, and Asn-27 each contribute to the Ca(2+) site. Asp-104, Asp-106, Asp-108, Ser-110, and Glu-115 together coordinate Ca(2+).

Functionally, like parvalbumins, SCPs seem to be more abundant in fast contracting muscles, but no functional relationship can be established from this distribution. The protein is Sarcoplasmic calcium-binding protein of Mizuhopecten yessoensis (Japanese scallop).